The sequence spans 887 residues: Kinesin-like protein KIF20A (887 aa).

Ser2 bears the N-acetylserine mark. Residues Ser7, Ser14, and Ser21 each carry the phosphoserine modification. One can recognise a Kinesin motor domain in the interval 63–506; sequence KVKVYLRIRP…AKFSALASQL (444 aa). ATP is bound at residue 159–166; sequence GVTNSGKT. Ser527 bears the Phosphoserine; by PLK1 mark. Residues 527–553 form a disordered region; it reads SPQVGPGLEKEDKADSDLEDSPEDEAD. Over residues 543–553 the composition is skewed to acidic residues; the sequence is DLEDSPEDEAD. Positions 559-804 form a coiled coil; it reads KEELLQVVEA…VLVKLDLQKK (246 aa). Phosphoserine occurs at positions 683 and 823. The tract at residues 805 to 887 is globular; sequence AACIAEQYHT…LLKSPFGKKY (83 aa). The interval 826-875 is disordered; it reads KRLGANQENQQPNHQPPGKKPFLRNLLPRTPTCQSSTDSSPYARILRSRH. Thr855 carries the phosphothreonine modification. Polar residues predominate over residues 856-865; sequence PTCQSSTDSS. A phosphoserine mark is found at Ser865, Ser876, and Ser881.

It belongs to the TRAFAC class myosin-kinesin ATPase superfamily. Kinesin family. Phosphorylated by PLK1 at Ser-527 during mitosis, creating a docking site for PLK1 and recruiting PLK1 at central spindle. In terms of tissue distribution, ubiquitously expressed, with highest levels in spleen and testis.

Its subcellular location is the golgi apparatus. It localises to the cytoplasm. It is found in the cytoskeleton. The protein resides in the spindle. Mitotic kinesin required for chromosome passenger complex (CPC)-mediated cytokinesis. Following phosphorylation by PLK1, involved in recruitment of PLK1 to the central spindle. Interacts with guanosine triphosphate (GTP)-bound forms of RAB6A and RAB6B. May act as a motor required for the retrograde RAB6 regulated transport of Golgi membranes and associated vesicles along microtubules. Has a microtubule plus end-directed motility. The protein is Kinesin-like protein KIF20A (Kif20a) of Mus musculus (Mouse).